The chain runs to 244 residues: Adenosylcobinamide-GDP ribazoletransferase (244 aa).

5 consecutive transmembrane segments (helical) span residues 31–51 (LLCY…ASHL), 55–75 (APAP…SGAL), 109–129 (IAVV…WVLV), 133–153 (AGAL…GLFL), and 188–208 (LLLG…VFLW).

Belongs to the CobS family. The cofactor is Mg(2+).

It is found in the cell inner membrane. The catalysed reaction is alpha-ribazole + adenosylcob(III)inamide-GDP = adenosylcob(III)alamin + GMP + H(+). The enzyme catalyses alpha-ribazole 5'-phosphate + adenosylcob(III)inamide-GDP = adenosylcob(III)alamin 5'-phosphate + GMP + H(+). It participates in cofactor biosynthesis; adenosylcobalamin biosynthesis; adenosylcobalamin from cob(II)yrinate a,c-diamide: step 7/7. Functionally, joins adenosylcobinamide-GDP and alpha-ribazole to generate adenosylcobalamin (Ado-cobalamin). Also synthesizes adenosylcobalamin 5'-phosphate from adenosylcobinamide-GDP and alpha-ribazole 5'-phosphate. In Pseudomonas putida (strain W619), this protein is Adenosylcobinamide-GDP ribazoletransferase.